The primary structure comprises 464 residues: V-type ATP synthase beta chain (464 aa).

Belongs to the ATPase alpha/beta chains family.

Its function is as follows. Produces ATP from ADP in the presence of a proton gradient across the membrane. The V-type beta chain is a regulatory subunit. The sequence is that of V-type ATP synthase beta chain from Streptococcus sanguinis (strain SK36).